The sequence spans 286 residues: Oxidoreductase clz15 (286 aa).

This sequence belongs to the asaB hydroxylase/desaturase family.

The protein operates within secondary metabolite biosynthesis. In terms of biological role, oxidoreductase; part of the gene cluster that mediates the biosynthesis of squalestatin S1 (SQS1, also known as zaragozic acid A), a heavily oxidized fungal polyketide that offers potent cholesterol lowering activity by targeting squalene synthase (SS). SQS1 is composed of a 2,8-dioxobicyclic[3.2.1]octane-3,4,5-tricarboxyclic acid core that is connected to two lipophilic polyketide arms. These initial steps feature the priming of an unusual benzoic acid starter unit onto the highly reducing polyketide synthase clz14, followed by oxaloacetate extension and product release to generate a tricarboxylic acid containing product. The phenylalanine ammonia lyase (PAL) clz10 and the acyl-CoA ligase clz12 are involved in transforming phenylalanine into benzoyl-CoA. The citrate synthase-like protein clz17 is involved in connecting the C-alpha-carbons of the hexaketide chain and oxaloacetate to afford the tricarboxylic acid unit. The potential hydrolytic enzymes, clz11 and clz13, are in close proximity to pks2 and may participate in product release. On the other side, the tetraketide arm is synthesized by a the squalestatin tetraketide synthase clz2 and enzymatically esterified to the core in the last biosynthetic step, by the acetyltransferase clz6. The biosynthesis of the tetraketide must involve 3 rounds of chain extension. After the first and second rounds methyl-transfer occurs, and in all rounds of extension the ketoreductase and dehydratase are active. The enoyl reductase and C-MeT of clz2 are not active in the final round of extension. The acetyltransferase clz6 appears to have a broad substrate selectivity for its acyl CoA substrate, allowing the in vitro synthesis of novel squalestatins. The biosynthesis of SQS1 requires several oxidative steps likely performed by oxidoreductases clz3, clz15 and clz16. Finally, in support of the identification of the cluster as being responsible for SQS1 production, the cluster contains a gene encoding a putative squalene synthase (SS) clz20, suggesting a likely mechanism for self-resistance. This Cochliobolus lunatus (Filamentous fungus) protein is Oxidoreductase clz15.